Here is a 122-residue protein sequence, read N- to C-terminus: MNFRMEHTMQPLPPEKHEDAEIAAGFLSAMANPKRLLILDSLVKEEMAVGALAHKVGLSQSALSQHLSKLRAQNLVSTRRDAQTIYYSSSSDAVLKILGALSDIYGDDTDAVEEKPLVRKSA.

The region spanning 15–109 (EKHEDAEIAA…ALSDIYGDDT (95 aa)) is the HTH arsR-type domain. The H-T-H motif DNA-binding region spans 49–68 (VGALAHKVGLSQSALSQHLS).

As to quaternary structure, binds to the operator site in homodimeric form.

In terms of biological role, negative transacting factor controlling the nod regulon. May control the expression of nodD1, nodD2, nodD3 and nodABC genes. The protein is Nodulation protein NolR (nolR) of Rhizobium meliloti (Ensifer meliloti).